Consider the following 69-residue polypeptide: Small, acid-soluble spore protein 1 (69 aa).

This sequence belongs to the alpha/beta-type SASP family.

Its function is as follows. SASP are bound to spore DNA. They are double-stranded DNA-binding proteins that cause DNA to change to an a-like conformation. They protect the DNA backbone from chemical and enzymatic cleavage and are thus involved in dormant spore's high resistance to UV light. The polypeptide is Small, acid-soluble spore protein 1 (Su-1) (Sporosarcina ureae).